Here is a 131-residue protein sequence, read N- to C-terminus: uncharacterized protein (131 aa).

The span at 31–40 (AAATSRAAPL) shows a compositional bias: low complexity. The interval 31–131 (AAATSRAAPL…EAKTEQTKTP (101 aa)) is disordered.

This is an uncharacterized protein from Homo sapiens (Human).